The following is a 331-amino-acid chain: UPF0324 membrane protein SERP0111 (331 aa).

10 helical membrane-spanning segments follow: residues 7-26, 31-48, 69-88, 93-115, 122-144, 154-176, 183-205, 249-271, 275-297, and 308-330; these read ASFM…SYIL, ILHT…AMIY, LLKF…DILG, LLLI…NQII, SILL…APIL, SVGI…EAIF, YGAW…GIGG, IPYF…IPSL, IINV…NIVL, and FIVI…SIMF.

This sequence belongs to the UPF0324 family.

The protein localises to the cell membrane. The chain is UPF0324 membrane protein SERP0111 from Staphylococcus epidermidis (strain ATCC 35984 / DSM 28319 / BCRC 17069 / CCUG 31568 / BM 3577 / RP62A).